Reading from the N-terminus, the 385-residue chain is Aspartate/prephenate aminotransferase (385 aa).

Glycine 39, tryptophan 125, and asparagine 175 together coordinate L-aspartate. Lysine 234 bears the N6-(pyridoxal phosphate)lysine mark. Position 361 (arginine 361) interacts with L-aspartate.

Belongs to the class-I pyridoxal-phosphate-dependent aminotransferase family. As to quaternary structure, homodimer. The cofactor is pyridoxal 5'-phosphate.

The protein localises to the cytoplasm. The enzyme catalyses L-aspartate + 2-oxoglutarate = oxaloacetate + L-glutamate. It catalyses the reaction L-arogenate + oxaloacetate = prephenate + L-aspartate. In terms of biological role, catalyzes the reversible conversion of aspartate and 2-oxoglutarate to glutamate and oxaloacetate. Can also transaminate prephenate in the presence of aspartate. In Thermus thermophilus (strain ATCC 27634 / DSM 579 / HB8), this protein is Aspartate/prephenate aminotransferase (aspC).